A 311-amino-acid chain; its full sequence is Homeobox protein Hox-B1a (311 aa).

The segment at residues 217–276 is a DNA-binding region (homeobox); the sequence is QNTIRTNFTTKQLTELEKEFHFSKYLTRARRVEIAATLELNETQVKIWFQNRRMKQKKRE. Residues 267-311 form a disordered region; that stretch reads NRRMKQKKREKEGLAPASSTSSKDLEDQSDHSTSTSPEASPSPDS. Residues 298–311 are compositionally biased toward low complexity; it reads STSTSPEASPSPDS.

This sequence belongs to the Antp homeobox family. Labial subfamily.

Its subcellular location is the nucleus. Functionally, sequence-specific transcription factor which is part of a developmental regulatory system that provides cells with specific positional identities on the anterior-posterior axis. This chain is Homeobox protein Hox-B1a (hoxb1a), found in Danio rerio (Zebrafish).